A 276-amino-acid polypeptide reads, in one-letter code: Insulin-like growth factor-binding protein 2-A (276 aa).

Positions 1-22 (MLSYVSCGLLLALVTFHGTARS) are cleaved as a signal peptide. In terms of domain architecture, IGFBP N-terminal spans 24 to 105 (MVFRCPSCTA…VQGLGRCGRK (82 aa)). Intrachain disulfides connect cysteine 28–cysteine 55, cysteine 31–cysteine 57, cysteine 39–cysteine 58, cysteine 46–cysteine 61, cysteine 69–cysteine 82, cysteine 76–cysteine 102, cysteine 180–cysteine 214, cysteine 225–cysteine 236, and cysteine 238–cysteine 259. One can recognise a Thyroglobulin type-1 domain in the interval 177-259 (QSQCQQELDQ…SPLIRGDPNC (83 aa)). A Cell attachment site motif is present at residues 254–256 (RGD).

As to quaternary structure, interacts equally well with igf1 and igf2. In embryos at 24 hpf, initially expressed in the lens and cranial region, and at 48 and 72 hpf in the brain boundary vasculature. Expression in these regions persists throughout the hatching period and by 96 hpf expression is most abundant in the liver. In both male and female adults, highest expression is in the liver with modest expression in the brain. In male but not females adults, expressed at a low level in muscle and gonad. Also expressed in the adult intestine.

It is found in the secreted. Its function is as follows. IGF-binding proteins prolong the half-life of the IGFs and have been shown to either inhibit or stimulate the growth promoting effects of the IGFs on cell culture. They alter the interaction of IGFs with their cell surface receptors. The polypeptide is Insulin-like growth factor-binding protein 2-A (igfbp2a) (Danio rerio (Zebrafish)).